We begin with the raw amino-acid sequence, 138 residues long: Ribulose bisphosphate carboxylase small subunit (138 aa).

Belongs to the RuBisCO small chain family. Heterohexadecamer of 8 large and 8 small subunits.

The protein localises to the plastid. It localises to the chloroplast. RuBisCO catalyzes two reactions: the carboxylation of D-ribulose 1,5-bisphosphate, the primary event in carbon dioxide fixation, as well as the oxidative fragmentation of the pentose substrate in the photorespiration process. Both reactions occur simultaneously and in competition at the same active site. Although the small subunit is not catalytic it is essential for maximal activity. Carbon dioxide and oxygen bind in the same pocket of the enzyme in a similar manner. The polypeptide is Ribulose bisphosphate carboxylase small subunit (Galdieria sulphuraria (Red alga)).